A 248-amino-acid chain; its full sequence is tRNA uridine(34) hydroxylase (248 aa).

The Rhodanese domain occupies arginine 127–tyrosine 221. Catalysis depends on cysteine 181, which acts as the Cysteine persulfide intermediate.

This sequence belongs to the TrhO family.

The enzyme catalyses uridine(34) in tRNA + AH2 + O2 = 5-hydroxyuridine(34) in tRNA + A + H2O. In terms of biological role, catalyzes oxygen-dependent 5-hydroxyuridine (ho5U) modification at position 34 in tRNAs. The sequence is that of tRNA uridine(34) hydroxylase from Xanthomonas axonopodis pv. citri (strain 306).